A 726-amino-acid polypeptide reads, in one-letter code: Pyrroloquinoline quinone-dependent pyranose dehydrogenase (726 aa).

Residues 1-18 (MRSSSLAWALGLVALANA) form the signal peptide. Heme b contacts are provided by Met83 and Tyr108. Cys138 and Cys141 are joined by a disulfide. N-linked (GlcNAc...) asparagine glycosylation occurs at Asn140. The heme b site is built by Arg181 and His182. A disordered region spans residues 211-242 (PPLSGGAPTQPPTQQPPTTTAPPPPPPSSTFV). Over residues 219-238 (TQPPTQQPPTTTAPPPPPPS) the composition is skewed to pro residues. Cys244 and Cys302 are joined by a disulfide. Pyrroloquinoline quinone is bound by residues Arg273, His363, Arg430, and Asn431. Ca(2+) contacts are provided by Ser449 and Asp451. A disulfide bridge connects residues Cys492 and Cys525. Pyrroloquinoline quinone is bound at residue His539. Asn551 is a glycosylation site (N-linked (GlcNAc...) asparagine). 3 residues coordinate pyrroloquinoline quinone: His560, Trp563, and Asn564. The cysteines at positions 611 and 619 are disulfide-linked. Arg621 provides a ligand contact to pyrroloquinoline quinone. The segment covering 659–678 (ITQPPITTSPPTPTTPPVVQ) has biased composition (pro residues). Residues 659-689 (ITQPPITTSPPTPTTPPVVQPPTTVAPPQAS) form a disordered region. Residues 679–689 (PPTTVAPPQAS) show a composition bias toward low complexity. One can recognise a CBM1 domain in the interval 688 to 724 (ASQTLWGQCGGQGWTGPTLCPANSVCRESNQWYSQCV).

This sequence belongs to the sugar dehydrogenase AA12 family. The cofactor is Ca(2+). It depends on pyrroloquinoline quinone as a cofactor. Heme b is required as a cofactor.

It localises to the secreted. Functionally, pyrroloquinoline quinone (PPQ)-dependent oxidoreductase that catalyzes the oxidation of various sugars including L-galactose, L-gulose, D-talose, D-arabinose, D-lyxose, L-fucose and D-glucosone. Shows significant activity toward the reverse-chair conformation of pyranoses. Shows little or no activity toward abundant sugars such as D-glucose, D-fructose, cellobiose, as well L-xylose and L-glucose. This enzyme is able to direct electrical communication with electrodes, without artificial electron mediators, thus allowing direct electron transfer (DET)-type bioelectrocatalysis. Exhibits binding affinity for insoluble cellulose. PDH does not oxidize cello-oligosaccharides but is able to activate the C-1-oxidizing Neurospora crassa LPMO9F and the C-4-oxidizing Neurospora crassa LPMO9C thanks to the electron-tranfer activity of the cytochrome domain and the localization of PDH in the vicinity of the LPMO substrates by the CBM1 domain. The protein is Pyrroloquinoline quinone-dependent pyranose dehydrogenase of Coprinopsis cinerea (strain Okayama-7 / 130 / ATCC MYA-4618 / FGSC 9003) (Inky cap fungus).